A 79-amino-acid chain; its full sequence is Sec-independent protein translocase protein TatA (79 aa).

A helical membrane pass occupies residues 1–21 (MGSLSIWHWIVVIAVILLLFG). Residues 43-60 (MQDDEKTAEKPEPVKTID) are compositionally biased toward basic and acidic residues. Residues 43 to 79 (MQDDEKTAEKPEPVKTIDHNAPAPGASRSDVGSKTTV) form a disordered region.

Belongs to the TatA/E family. As to quaternary structure, the Tat system comprises two distinct complexes: a TatABC complex, containing multiple copies of TatA, TatB and TatC subunits, and a separate TatA complex, containing only TatA subunits. Substrates initially bind to the TatABC complex, which probably triggers association of the separate TatA complex to form the active translocon.

The protein resides in the cell inner membrane. In terms of biological role, part of the twin-arginine translocation (Tat) system that transports large folded proteins containing a characteristic twin-arginine motif in their signal peptide across membranes. TatA could form the protein-conducting channel of the Tat system. This is Sec-independent protein translocase protein TatA from Nitrobacter hamburgensis (strain DSM 10229 / NCIMB 13809 / X14).